Reading from the N-terminus, the 297-residue chain is uncharacterized protein (297 aa).

Residue Glu46 is part of the active site.

The protein belongs to the PhzF family. In terms of assembly, homodimer and homotetramer.

This is an uncharacterized protein from Salmonella typhimurium (strain LT2 / SGSC1412 / ATCC 700720).